The following is a 477-amino-acid chain: D-alanyl-D-alanine carboxypeptidase DacB (477 aa).

A signal peptide spans 1–20 (MRFSRFIIGLTSCIAFSVQA). The active-site Acyl-ester intermediate is the Ser-62. The active-site Proton acceptor is Lys-65. Residues 90-263 (GNVENGVLKG…YAGAILKDEL (174 aa)) form an absent in class-A beta-lactamases region. Ser-306 is a catalytic residue. Residue Lys-417 participates in substrate binding.

This sequence belongs to the peptidase S13 family.

Its subcellular location is the periplasm. The catalysed reaction is Preferential cleavage: (Ac)2-L-Lys-D-Ala-|-D-Ala. Also transpeptidation of peptidyl-alanyl moieties that are N-acyl substituents of D-alanine.. It functions in the pathway cell wall biogenesis; peptidoglycan biosynthesis. In terms of biological role, not involved in transpeptidation but exclusively catalyzes a DD-carboxypeptidase and DD-endopeptidase reaction. The sequence is that of D-alanyl-D-alanine carboxypeptidase DacB (dacB) from Escherichia coli (strain K12).